The primary structure comprises 258 residues: Ribosomal RNA small subunit methyltransferase J (258 aa).

S-adenosyl-L-methionine is bound by residues 106–107 (RD), 122–123 (ER), and Asp181.

Belongs to the methyltransferase superfamily. RsmJ family.

It is found in the cytoplasm. It carries out the reaction guanosine(1516) in 16S rRNA + S-adenosyl-L-methionine = N(2)-methylguanosine(1516) in 16S rRNA + S-adenosyl-L-homocysteine + H(+). Specifically methylates the guanosine in position 1516 of 16S rRNA. In Pseudoalteromonas atlantica (strain T6c / ATCC BAA-1087), this protein is Ribosomal RNA small subunit methyltransferase J.